The following is a 198-amino-acid chain: Protein GrpE (198 aa).

The tract at residues 1 to 32 is disordered; sequence MTTEKETATPADVEVASQEEQIDQTTEAQVEE.

This sequence belongs to the GrpE family. In terms of assembly, homodimer.

It localises to the cytoplasm. In terms of biological role, participates actively in the response to hyperosmotic and heat shock by preventing the aggregation of stress-denatured proteins, in association with DnaK and GrpE. It is the nucleotide exchange factor for DnaK and may function as a thermosensor. Unfolded proteins bind initially to DnaJ; upon interaction with the DnaJ-bound protein, DnaK hydrolyzes its bound ATP, resulting in the formation of a stable complex. GrpE releases ADP from DnaK; ATP binding to DnaK triggers the release of the substrate protein, thus completing the reaction cycle. Several rounds of ATP-dependent interactions between DnaJ, DnaK and GrpE are required for fully efficient folding. The chain is Protein GrpE from Haemophilus ducreyi (strain 35000HP / ATCC 700724).